Here is a 365-residue protein sequence, read N- to C-terminus: DNA replication and repair protein RecF (365 aa).

30 to 37 (GANGQGKT) contacts ATP.

The protein belongs to the RecF family.

It is found in the cytoplasm. Functionally, the RecF protein is involved in DNA metabolism; it is required for DNA replication and normal SOS inducibility. RecF binds preferentially to single-stranded, linear DNA. It also seems to bind ATP. This chain is DNA replication and repair protein RecF, found in Geobacter metallireducens (strain ATCC 53774 / DSM 7210 / GS-15).